The sequence spans 84 residues: Large ribosomal subunit protein bL27 (84 aa).

A disordered region spans residues 1–21; sequence MAHKKGGGSTKNGRDSNPKYL.

The protein belongs to the bacterial ribosomal protein bL27 family.

The sequence is that of Large ribosomal subunit protein bL27 from Chlorobium luteolum (strain DSM 273 / BCRC 81028 / 2530) (Pelodictyon luteolum).